The following is an 896-amino-acid chain: Valine--tRNA ligase (896 aa).

A 'HIGH' region motif is present at residues 43–53 (PNVTGSLHIGH). The short motif at 545-549 (KMSKS) is the 'KMSKS' region element. Lysine 548 is a binding site for ATP. The stretch at 831 to 857 (DLDAERARLAKGIAAAEKERDGLAARL) forms a coiled coil.

Belongs to the class-I aminoacyl-tRNA synthetase family. ValS type 1 subfamily. As to quaternary structure, monomer.

It is found in the cytoplasm. It carries out the reaction tRNA(Val) + L-valine + ATP = L-valyl-tRNA(Val) + AMP + diphosphate. Its function is as follows. Catalyzes the attachment of valine to tRNA(Val). As ValRS can inadvertently accommodate and process structurally similar amino acids such as threonine, to avoid such errors, it has a 'posttransfer' editing activity that hydrolyzes mischarged Thr-tRNA(Val) in a tRNA-dependent manner. The chain is Valine--tRNA ligase from Rhizorhabdus wittichii (strain DSM 6014 / CCUG 31198 / JCM 15750 / NBRC 105917 / EY 4224 / RW1) (Sphingomonas wittichii).